The chain runs to 676 residues: DNA ligase (676 aa).

Residues Asp35–Asp39, Ser84–Leu85, and Glu115 contribute to the NAD(+) site. The active-site N6-AMP-lysine intermediate is Lys117. NAD(+)-binding residues include Arg138, Glu177, Lys294, and Lys318. Positions 412, 415, 430, and 436 each coordinate Zn(2+). Positions Pro595–Ala676 constitute a BRCT domain.

This sequence belongs to the NAD-dependent DNA ligase family. LigA subfamily. Mg(2+) serves as cofactor. It depends on Mn(2+) as a cofactor.

The catalysed reaction is NAD(+) + (deoxyribonucleotide)n-3'-hydroxyl + 5'-phospho-(deoxyribonucleotide)m = (deoxyribonucleotide)n+m + AMP + beta-nicotinamide D-nucleotide.. In terms of biological role, DNA ligase that catalyzes the formation of phosphodiester linkages between 5'-phosphoryl and 3'-hydroxyl groups in double-stranded DNA using NAD as a coenzyme and as the energy source for the reaction. It is essential for DNA replication and repair of damaged DNA. The polypeptide is DNA ligase (Acinetobacter baylyi (strain ATCC 33305 / BD413 / ADP1)).